The primary structure comprises 804 residues: Lon protease 2 (804 aa).

The Lon N-terminal domain maps to 6 to 199 (MPVCPVRGSV…AVLVLLEAEL (194 aa)). 362–369 (GPPGVGKT) provides a ligand contact to ATP. Positions 598-779 (EPQVGVATGM…DQVLDLALVG (182 aa)) constitute a Lon proteolytic domain. Residues S685 and K728 contribute to the active site.

It belongs to the peptidase S16 family. As to quaternary structure, homohexamer. Organized in a ring with a central cavity.

Its subcellular location is the cytoplasm. The enzyme catalyses Hydrolysis of proteins in presence of ATP.. In terms of biological role, ATP-dependent serine protease that mediates the selective degradation of mutant and abnormal proteins as well as certain short-lived regulatory proteins. Required for cellular homeostasis and for survival from DNA damage and developmental changes induced by stress. Degrades polypeptides processively to yield small peptide fragments that are 5 to 10 amino acids long. Binds to DNA in a double-stranded, site-specific manner. This Thermus thermophilus (strain ATCC BAA-163 / DSM 7039 / HB27) protein is Lon protease 2.